The chain runs to 396 residues: Tryptophan synthase beta chain (396 aa).

The residue at position 86 (Lys86) is an N6-(pyridoxal phosphate)lysine.

It belongs to the TrpB family. Tetramer of two alpha and two beta chains. The cofactor is pyridoxal 5'-phosphate.

The catalysed reaction is (1S,2R)-1-C-(indol-3-yl)glycerol 3-phosphate + L-serine = D-glyceraldehyde 3-phosphate + L-tryptophan + H2O. It participates in amino-acid biosynthesis; L-tryptophan biosynthesis; L-tryptophan from chorismate: step 5/5. In terms of biological role, the beta subunit is responsible for the synthesis of L-tryptophan from indole and L-serine. The protein is Tryptophan synthase beta chain of Sodalis glossinidius (strain morsitans).